Here is a 104-residue protein sequence, read N- to C-terminus: Large ribosomal subunit protein uL24 (104 aa).

This sequence belongs to the universal ribosomal protein uL24 family. As to quaternary structure, part of the 50S ribosomal subunit.

One of two assembly initiator proteins, it binds directly to the 5'-end of the 23S rRNA, where it nucleates assembly of the 50S subunit. In terms of biological role, one of the proteins that surrounds the polypeptide exit tunnel on the outside of the subunit. This is Large ribosomal subunit protein uL24 from Clostridium beijerinckii (strain ATCC 51743 / NCIMB 8052) (Clostridium acetobutylicum).